Consider the following 217-residue polypeptide: 3,4-dihydroxy-2-butanone 4-phosphate synthase (217 aa).

Residues 37 to 38, Asp-42, 150 to 154, and Glu-174 each bind D-ribulose 5-phosphate; these read RE and RGGHT. A Mg(2+)-binding site is contributed by Glu-38. His-153 lines the Mg(2+) pocket.

Belongs to the DHBP synthase family. In terms of assembly, homodimer. It depends on Mg(2+) as a cofactor. Mn(2+) is required as a cofactor.

The catalysed reaction is D-ribulose 5-phosphate = (2S)-2-hydroxy-3-oxobutyl phosphate + formate + H(+). It participates in cofactor biosynthesis; riboflavin biosynthesis; 2-hydroxy-3-oxobutyl phosphate from D-ribulose 5-phosphate: step 1/1. In terms of biological role, catalyzes the conversion of D-ribulose 5-phosphate to formate and 3,4-dihydroxy-2-butanone 4-phosphate. The protein is 3,4-dihydroxy-2-butanone 4-phosphate synthase of Citrobacter koseri (strain ATCC BAA-895 / CDC 4225-83 / SGSC4696).